We begin with the raw amino-acid sequence, 531 residues long: Squalene epoxidase 1 (531 aa).

The chain crosses the membrane as a helical span at residues 9 to 29 (ILPLLISSLLISFVAFYGFFV). FAD contacts are provided by residues 70–71 (VA), 90–91 (ER), Arg-98, Arg-169, Val-185, Asp-347, and Met-360. A run of 2 helical transmembrane segments spans residues 458–478 (LVCH…IPFP) and 483–503 (IWLG…IIKA).

Belongs to the squalene monooxygenase family. FAD serves as cofactor. Expressed in seedlings, leaves, stems, inflorescences, sepals, style and siliques. Expressed in expanded cotyledons, root tips and cortical cells of the root elongation zone, but not in root hair cells. In leaves, expressed in most cells, with a very strong expression in stomata.

Its subcellular location is the membrane. The catalysed reaction is squalene + reduced [NADPH--hemoprotein reductase] + O2 = (S)-2,3-epoxysqualene + oxidized [NADPH--hemoprotein reductase] + H2O + H(+). It functions in the pathway terpene metabolism; lanosterol biosynthesis; lanosterol from farnesyl diphosphate: step 2/3. In terms of biological role, catalyzes the stereospecific oxidation of squalene to (S)-2,3-epoxysqualene, and is considered to be a rate-limiting enzyme in steroid biosynthesis. Can produce not only oxidosqualene, but also 2,3:22,23-dioxidosqualene. Main squalene epoxidase in the root. Sqe1 mutants may show defects in membrane lipid rafts, impairing the correct localization of RHD2 NADPH oxidase and the proper polarized production of ROS. The sequence is that of Squalene epoxidase 1 (SQE1) from Arabidopsis thaliana (Mouse-ear cress).